The sequence spans 1282 residues: Myosin-1 (1282 aa).

A disordered region spans residues 1–30 (MAISKKAGAKKAGAVSKPPPSKGASSKGGV). Residues 44–723 (AGVSDMTLLS…TLFALETMRD (680 aa)) enclose the Myosin motor domain. 137-144 (GESGAGKT) contacts ATP. S365 is modified (phosphoserine). Residues 412–494 (VIGVLDIYGF…PGIFSALNDA (83 aa)) are actin-binding. The interval 569 to 590 (LQKLFPDRPDPNSKKRPPTAGD) is disordered. IQ domains are found at residues 727–747 (HNMA…KEEC) and 748–773 (ARRI…YGHQ). Residues 781–977 (RRRFSLLGLR…AVSVCSGEPA (197 aa)) enclose the TH1 domain. The tract at residues 973–1073 (SGEPANSVSR…PPPAAVAPSE (101 aa)) is disordered. Positions 1029–1058 (PGSGAAGTARPAAAVGSASAGAGVGATRSA) are enriched in low complexity. Pro residues predominate over residues 1059 to 1068 (PRPPPPPPAA). The region spanning 1074 to 1135 (PQVARYKALY…PSNYLELIVQ (62 aa)) is the SH3 domain. Residues 1237-1282 (AAAAAAGAGANGKGAGAPPAVAAKPVVAPKPAGSNGRAMPPPPPRR) are disordered. Low complexity predominate over residues 1252–1269 (GAPPAVAAKPVVAPKPAG).

Belongs to the TRAFAC class myosin-kinesin ATPase superfamily. Myosin family. Post-translationally, phosphorylation of the TEDS site (Ser-365) is required for the polarization of the actin cytoskeleton. Phosphorylation probably activates the myosin-I ATPase activity.

Its subcellular location is the cytoplasm. The protein localises to the cytoskeleton. It localises to the actin patch. In terms of biological role, type-I myosin implicated in the organization of the actin cytoskeleton. Required for proper actin cytoskeleton polarization. At the cell cortex, assembles in patch-like structures together with proteins from the actin-polymerizing machinery and promotes actin assembly. Functions as actin nucleation-promoting factor (NPF) for the Arp2/3 complex. This Mycosarcoma maydis (Corn smut fungus) protein is Myosin-1 (myo1).